Reading from the N-terminus, the 125-residue chain is Ribosome-binding factor A (125 aa).

Belongs to the RbfA family. In terms of assembly, monomer. Binds 30S ribosomal subunits, but not 50S ribosomal subunits or 70S ribosomes.

It is found in the cytoplasm. Functionally, one of several proteins that assist in the late maturation steps of the functional core of the 30S ribosomal subunit. Associates with free 30S ribosomal subunits (but not with 30S subunits that are part of 70S ribosomes or polysomes). Required for efficient processing of 16S rRNA. May interact with the 5'-terminal helix region of 16S rRNA. This chain is Ribosome-binding factor A, found in Wigglesworthia glossinidia brevipalpis.